A 359-amino-acid chain; its full sequence is Fructose-bisphosphate aldolase class 2 (359 aa).

Position 9 is an N6-acetyllysine (lysine 9). D-glyceraldehyde 3-phosphate is bound at residue serine 62. Aspartate 110 functions as the Proton donor in the catalytic mechanism. Positions 111, 145, 175, and 227 each coordinate Zn(2+). Glycine 228 contributes to the dihydroxyacetone phosphate binding site. A Zn(2+)-binding site is contributed by histidine 265. Dihydroxyacetone phosphate is bound by residues 266–268 (GGS) and 287–290 (NIDT).

It belongs to the class II fructose-bisphosphate aldolase family. Homodimer. It depends on Zn(2+) as a cofactor.

It carries out the reaction beta-D-fructose 1,6-bisphosphate = D-glyceraldehyde 3-phosphate + dihydroxyacetone phosphate. The protein operates within carbohydrate degradation; glycolysis; D-glyceraldehyde 3-phosphate and glycerone phosphate from D-glucose: step 4/4. In terms of biological role, catalyzes the aldol condensation of dihydroxyacetone phosphate (DHAP or glycerone-phosphate) with glyceraldehyde 3-phosphate (G3P) to form fructose 1,6-bisphosphate (FBP) in gluconeogenesis and the reverse reaction in glycolysis. This chain is Fructose-bisphosphate aldolase class 2 (fbaA), found in Escherichia coli O157:H7.